A 576-amino-acid chain; its full sequence is Arginine--tRNA ligase (576 aa).

The 'HIGH' region motif lies at 122–132 (PNVAKEMHVGH).

The protein belongs to the class-I aminoacyl-tRNA synthetase family. Monomer.

It is found in the cytoplasm. The enzyme catalyses tRNA(Arg) + L-arginine + ATP = L-arginyl-tRNA(Arg) + AMP + diphosphate. The sequence is that of Arginine--tRNA ligase from Hamiltonella defensa subsp. Acyrthosiphon pisum (strain 5AT).